A 179-amino-acid polypeptide reads, in one-letter code: Large ribosomal subunit protein uL6 (179 aa).

This sequence belongs to the universal ribosomal protein uL6 family. Part of the 50S ribosomal subunit.

Functionally, this protein binds to the 23S rRNA, and is important in its secondary structure. It is located near the subunit interface in the base of the L7/L12 stalk, and near the tRNA binding site of the peptidyltransferase center. This Bifidobacterium adolescentis (strain ATCC 15703 / DSM 20083 / NCTC 11814 / E194a) protein is Large ribosomal subunit protein uL6.